The primary structure comprises 353 residues: Protein U67 (353 aa).

It belongs to the herpesviridae UL95 family.

In Homo sapiens (Human), this protein is Protein U67 (U67).